The following is a 93-amino-acid chain: Small ribosomal subunit protein uS19 (93 aa).

The protein belongs to the universal ribosomal protein uS19 family.

Functionally, protein S19 forms a complex with S13 that binds strongly to the 16S ribosomal RNA. This chain is Small ribosomal subunit protein uS19, found in Helicobacter acinonychis (strain Sheeba).